The primary structure comprises 226 residues: Thiocyanate methyltransferase 1 (226 aa).

Residues W35, W39, W46, and G73 each contribute to the S-adenosyl-L-methionine site. Position 85 is a phosphoserine (S85). S-adenosyl-L-methionine is bound by residues D94, 122-123 (DF), and Y138.

This sequence belongs to the class I-like SAM-binding methyltransferase superfamily. TPMT family. Ubiquitous.

It carries out the reaction thiocyanate + S-adenosyl-L-methionine = methyl thiocyanate + S-adenosyl-L-homocysteine. S-adenosyl-L-methionine-dependent methyltransferase. Probably involved in glucosinolate metabolism and defense against phytopathogens. Highly reactive to thiocyanate (NCS(-)) derived from myrosinase-mediated hydrolysis of glucosinolates upon tissue damage. Also accepts halid ions as substrates with a lower affinity. The protein is Thiocyanate methyltransferase 1 (TMT1) of Brassica oleracea (Wild cabbage).